Reading from the N-terminus, the 124-residue chain is Small ribosomal subunit protein uS13 (124 aa).

Residues 95 to 124 are disordered; sequence GLPVRGQRTKTNARTRKGPKRTIAGKKKAR.

The protein belongs to the universal ribosomal protein uS13 family. In terms of assembly, part of the 30S ribosomal subunit. Forms a loose heterodimer with protein S19. Forms two bridges to the 50S subunit in the 70S ribosome.

In terms of biological role, located at the top of the head of the 30S subunit, it contacts several helices of the 16S rRNA. In the 70S ribosome it contacts the 23S rRNA (bridge B1a) and protein L5 of the 50S subunit (bridge B1b), connecting the 2 subunits; these bridges are implicated in subunit movement. Contacts the tRNAs in the A and P-sites. The polypeptide is Small ribosomal subunit protein uS13 (Mycobacterium avium (strain 104)).